Here is a 197-residue protein sequence, read N- to C-terminus: Phosphoheptose isomerase (197 aa).

The SIS domain maps to 37–197 (MLQCLMNDGK…CIDSVLLEGM (161 aa)). Substrate is bound at residue 52–54 (NGG). The Zn(2+) site is built by histidine 61 and glutamate 65. Residues glutamate 65, 94–95 (ND), 120–122 (STS), serine 125, and glutamine 175 contribute to the substrate site. Residues glutamine 175 and histidine 183 each coordinate Zn(2+).

The protein belongs to the SIS family. GmhA subfamily. In terms of assembly, homotetramer. It depends on Zn(2+) as a cofactor.

It is found in the cytoplasm. The enzyme catalyses 2 D-sedoheptulose 7-phosphate = D-glycero-alpha-D-manno-heptose 7-phosphate + D-glycero-beta-D-manno-heptose 7-phosphate. Its pathway is carbohydrate biosynthesis; D-glycero-D-manno-heptose 7-phosphate biosynthesis; D-glycero-alpha-D-manno-heptose 7-phosphate and D-glycero-beta-D-manno-heptose 7-phosphate from sedoheptulose 7-phosphate: step 1/1. Its function is as follows. Catalyzes the isomerization of sedoheptulose 7-phosphate in D-glycero-D-manno-heptose 7-phosphate. This chain is Phosphoheptose isomerase, found in Neisseria gonorrhoeae (strain ATCC 700825 / FA 1090).